Consider the following 447-residue polypeptide: Na(+)-translocating NADH-quinone reductase subunit A (447 aa).

This sequence belongs to the NqrA family. In terms of assembly, composed of six subunits; NqrA, NqrB, NqrC, NqrD, NqrE and NqrF.

The catalysed reaction is a ubiquinone + n Na(+)(in) + NADH + H(+) = a ubiquinol + n Na(+)(out) + NAD(+). NQR complex catalyzes the reduction of ubiquinone-1 to ubiquinol by two successive reactions, coupled with the transport of Na(+) ions from the cytoplasm to the periplasm. NqrA to NqrE are probably involved in the second step, the conversion of ubisemiquinone to ubiquinol. This chain is Na(+)-translocating NADH-quinone reductase subunit A, found in Yersinia pseudotuberculosis serotype O:1b (strain IP 31758).